Reading from the N-terminus, the 996-residue chain is Receptor-like protein kinase HSL1 (996 aa).

The signal sequence occupies residues methionine 1–serine 15. Over leucine 16–valine 618 the chain is Extracellular. LRR repeat units follow at residues phenylalanine 59 to leucine 83, serine 84 to cysteine 107, serine 109 to isoleucine 131, threonine 133 to lysine 154, phenylalanine 155 to asparagine 178, isoleucine 179 to asparagine 203, threonine 205 to leucine 228, serine 229 to leucine 252, threonine 253 to leucine 276, serine 278 to arginine 299, valine 300 to serine 323, asparagine 325 to asparagine 347, serine 348 to lysine 371, glutamate 373 to cysteine 395, arginine 396 to leucine 419, histidine 421 to alanine 443, serine 444 to leucine 467, aspartate 468 to leucine 491, glutamate 493 to tryptophan 515, lysine 516 to leucine 539, valine 541 to serine 562, and leucine 563 to aspartate 586. N-linked (GlcNAc...) asparagine glycans are attached at residues asparagine 93 and asparagine 97. N-linked (GlcNAc...) asparagine glycosylation is found at asparagine 143, asparagine 178, asparagine 186, and asparagine 203. N-linked (GlcNAc...) asparagine glycosylation occurs at asparagine 262. 2 N-linked (GlcNAc...) asparagine glycosylation sites follow: asparagine 429 and asparagine 445. Asparagine 569 is a glycosylation site (N-linked (GlcNAc...) asparagine). The chain crosses the membrane as a helical span at residues tryptophan 619 to phenylalanine 639. The Cytoplasmic segment spans residues tyrosine 640–alanine 996. Residues leucine 676 to isoleucine 962 form the Protein kinase domain. Residues isoleucine 682–valine 690 and lysine 704 contribute to the ATP site. 2 positions are modified to phosphotyrosine: tyrosine 764 and tyrosine 802. Aspartate 815 serves as the catalytic Proton acceptor. The residue at position 851 (serine 851) is a Phosphoserine. Phosphotyrosine is present on residues tyrosine 859 and tyrosine 866. At threonine 867 the chain carries Phosphothreonine. Residues glutamate 967–alanine 996 are disordered. Positions aspartate 968–lysine 980 are enriched in basic and acidic residues.

Belongs to the protein kinase superfamily. Ser/Thr protein kinase family.

The protein localises to the cell membrane. It carries out the reaction L-seryl-[protein] + ATP = O-phospho-L-seryl-[protein] + ADP + H(+). It catalyses the reaction L-threonyl-[protein] + ATP = O-phospho-L-threonyl-[protein] + ADP + H(+). This is Receptor-like protein kinase HSL1 (HSL1) from Arabidopsis thaliana (Mouse-ear cress).